The sequence spans 303 residues: Phosphatidylglycerol--prolipoprotein diacylglyceryl transferase (303 aa).

Helical transmembrane passes span 18 to 38 (LGPFSLRWYGLLIAISVLVGL), 58 to 78 (LLPILVLASVIGARIYYVAFE), 106 to 126 (IWGGGIAIHGALIMGTLSIIF), and 133 to 153 (EPFWDVIDVLVPSVALGQAIG). Arg154 serves as a coordination point for a 1,2-diacyl-sn-glycero-3-phospho-(1'-sn-glycerol). Helical transmembrane passes span 193-213 (PTFLYESVWNIFVFGILIFLF), 223-243 (LPPGSLSCLYLITYSLGRFWI), and 266-286 (IAQLISLFLISAGLLGIWRIY).

The protein belongs to the Lgt family.

The protein localises to the cell inner membrane. It carries out the reaction L-cysteinyl-[prolipoprotein] + a 1,2-diacyl-sn-glycero-3-phospho-(1'-sn-glycerol) = an S-1,2-diacyl-sn-glyceryl-L-cysteinyl-[prolipoprotein] + sn-glycerol 1-phosphate + H(+). The protein operates within protein modification; lipoprotein biosynthesis (diacylglyceryl transfer). Catalyzes the transfer of the diacylglyceryl group from phosphatidylglycerol to the sulfhydryl group of the N-terminal cysteine of a prolipoprotein, the first step in the formation of mature lipoproteins. The chain is Phosphatidylglycerol--prolipoprotein diacylglyceryl transferase from Prochlorococcus marinus (strain NATL1A).